A 403-amino-acid chain; its full sequence is Tryptophan synthase beta chain (403 aa).

Residue Lys-87 is modified to N6-(pyridoxal phosphate)lysine.

Belongs to the TrpB family. Tetramer of two alpha and two beta chains. Requires pyridoxal 5'-phosphate as cofactor.

It carries out the reaction (1S,2R)-1-C-(indol-3-yl)glycerol 3-phosphate + L-serine = D-glyceraldehyde 3-phosphate + L-tryptophan + H2O. The protein operates within amino-acid biosynthesis; L-tryptophan biosynthesis; L-tryptophan from chorismate: step 5/5. The beta subunit is responsible for the synthesis of L-tryptophan from indole and L-serine. The protein is Tryptophan synthase beta chain of Shewanella loihica (strain ATCC BAA-1088 / PV-4).